We begin with the raw amino-acid sequence, 394 residues long: GVGFKAGVKDYKLTYYTPEYQTKDTDILAAFRVTPQPGVPPEEAGAAVAAESSTGTWTTVWTDGLTSLDRYKGRCYHIEPVIGEENQYFCYVAYPLDLFEEGSVTNMFTSIVGNVFGFKALRALRLEDLRIPPAYSKTFQGPPHGIQVERDKLNKYGRPLLGCTIKPKLGLSAKNYGRAVYECLRGGLDFTKDDENVNSQPFMRWRDRFLFCAEAIYKSQAETGEIKGHYLNATAGTCEEMIKRAVFARELGVPIVMHDYLTGGFTANTTLAAYCRDNGLLLHIHRAMHAVIDRQKNHGMHFRVLAKALRMSGGDHIHSGTVVGKLEGDRQLTLGFVDLLRDDYIEKDRSRGIFFTQDWVSMPGVLPVASGGIHVWHMPALTEIFGDDSVLQFG.

Residue Lys-5 is modified to N6,N6,N6-trimethyllysine. The substrate site is built by Asn-114 and Thr-164. Residue Lys-166 is the Proton acceptor of the active site. Substrate is bound at residue Lys-168. Mg(2+) contacts are provided by Lys-192, Asp-194, and Glu-195. Lys-192 carries the post-translational modification N6-carboxylysine. His-285 (proton acceptor) is an active-site residue. Substrate-binding residues include Arg-286, His-318, and Ser-370.

The protein belongs to the RuBisCO large chain family. Type I subfamily. Heterohexadecamer of 8 large chains and 8 small chains; disulfide-linked. The disulfide link is formed within the large subunit homodimers. The cofactor is Mg(2+). In terms of processing, the disulfide bond which can form in the large chain dimeric partners within the hexadecamer appears to be associated with oxidative stress and protein turnover.

The protein resides in the plastid. It localises to the chloroplast. It carries out the reaction 2 (2R)-3-phosphoglycerate + 2 H(+) = D-ribulose 1,5-bisphosphate + CO2 + H2O. The enzyme catalyses D-ribulose 1,5-bisphosphate + O2 = 2-phosphoglycolate + (2R)-3-phosphoglycerate + 2 H(+). RuBisCO catalyzes two reactions: the carboxylation of D-ribulose 1,5-bisphosphate, the primary event in carbon dioxide fixation, as well as the oxidative fragmentation of the pentose substrate in the photorespiration process. Both reactions occur simultaneously and in competition at the same active site. This chain is Ribulose bisphosphate carboxylase large chain (rbcL), found in Alisma plantago-aquatica (Common water-plantain).